The primary structure comprises 403 residues: MTESTFPQYPRLVLSKGREKSLLRRHPWVFSGAVSRLEGKANLGETIDIVDHQGKWLARGAWSPASQIRARVWTFDKAESIDIAFFTRRLRQAQQWRDWLAKKDGLDSYRLIAGESDGLPGVTIDRFGHFLVLQLLSAGAEYQRAALISALQTCYPDCAIYDRSDVAVRKKEGMALTQGPVTGELPPALLPIEEYGMKLLVDIQGGHKTGYYLDQRDSRLATRRYVENQRVLNCFSYTGGFAVSALMGGCRQVVSVDTSQDALDIARQNVELNQLDLSKAEFVRDDVFKLLRAYREHGEKFDVIIMDPPKFVENKSQLMGACRGYKDINMLAIQLLNPGGILLTFSCSGLMTSDLFQKIIADAAIDAGRDVQFIEQFRQAADHPVIATYPEGLYLKGFACRVM.

One can recognise a PUA domain in the interval 9 to 88 (YPRLVLSKGR…ESIDIAFFTR (80 aa)).

It belongs to the methyltransferase superfamily. RlmI family.

It localises to the cytoplasm. It catalyses the reaction cytidine(1962) in 23S rRNA + S-adenosyl-L-methionine = 5-methylcytidine(1962) in 23S rRNA + S-adenosyl-L-homocysteine + H(+). Functionally, specifically methylates the cytosine at position 1962 (m5C1962) of 23S rRNA. This is Ribosomal RNA large subunit methyltransferase I from Salmonella choleraesuis (strain SC-B67).